The sequence spans 1473 residues: Collagen alpha-1(XVII) chain (1473 aa).

Basic and acidic residues predominate over residues 1-19; that stretch reads MDITQKNKRDGTEVTERII. Disordered regions lie at residues 1–155 and 168–188; these read MDIT…PSTR and GSRSASVSPTRNSSNTLPIPK. Residues 1–474 are Cytoplasmic-facing; sequence MDITQKNKRD…CGSWCSWWKW (474 aa). The interval 1-572 is nonhelical region (NC16); sequence MDITQKNKRD…MTEQENGNLR (572 aa). Polar residues-rich tracts occupy residues 57–96, 111–120, and 170–184; these read LTHGSSGYINSSGSLRGNASTSSYRRAHSPASTLPNSPGS, EGSSSGNSSP, and RSASVSPTRNSSNTL. The necessary for interaction with DST and for the recruitment of DST to hemidesmosome stretch occupies residues 146 to 231; sequence RLQSASPSTR…WSSTLPAGSS (86 aa). The helical; Signal-anchor for type II membrane protein transmembrane segment at 475–495 threads the bilayer; that stretch reads LLGLLLTWLLLLGLLFGLIAL. Residues 496-1473 are Extracellular-facing; the sequence is AEEVRKLKAR…RRRRSIAVKP (978 aa). Disordered stretches follow at residues 567–1017, 1173–1234, and 1261–1308; these read ENGN…LSSS, FRGI…ISGA, and SFIV…SSMG. The interval 573–1459 is triple-helical region; the sequence is GSPGPKGDMG…KGEKGDKGDQ (887 aa). Low complexity-rich tracts occupy residues 619 to 638, 667 to 678, 729 to 742, and 769 to 790; these read EPGMEGPMGQRGREGPMGPR, PGSVGPKGSIGP, EPGAKGAMGPAGPD, and PGKPGLTGPQGPQGIPGTPGRP. Residues 814–835 are compositionally biased toward pro residues; it reads PGPPGPPGAMGPPGPPGAPGPV. Low complexity-rich tracts occupy residues 837 to 847 and 854 to 866; these read PAGLPGQQGPR and GESFMGSSSSFSE. Pro residues-rich tracts occupy residues 878-899 and 913-922; these read PPGPPGPPGPPGEGLPGPPGPP and PPGPPGPPGP. The segment covering 940–957 has biased composition (low complexity); the sequence is FPGLSGSGSSSLGLNLQG. Composition is skewed to pro residues over residues 1001-1011 and 1179-1188; these read PPGPPGPPGPP and PPGPPGPPGL. The segment covering 1198-1210 has biased composition (polar residues); sequence TEDLSSYLQTAGL. 2 stretches are compositionally biased toward pro residues: residues 1214–1228 and 1266–1275; these read PGPPGPPGPPGPRGP and PPGPPGPQGP. Residues 1283–1307 are compositionally biased toward low complexity; that stretch reads STDSSYSRSGSSSSFSRDTSYSSSM. An N-linked (GlcNAc...) asparagine glycan is attached at asparagine 1404. The disordered stretch occupies residues 1417–1473; it reads GAIPGPPGQKGEMGIPGPKGERGPAGPPGPRGHKGEKGDKGDQFYIGRRRRSIAVKP. A compositionally biased stretch (basic and acidic residues) spans 1449–1458; that stretch reads HKGEKGDKGD. The interval 1460-1473 is nonhelical region (NC1); the sequence is FYIGRRRRSIAVKP. Basic residues predominate over residues 1463-1473; it reads GRRRRSIAVKP.

In terms of assembly, homotrimers of alpha 1(XVII)chains. Interacts (via cytoplasmic region) with ITGB4 (via cytoplasmic region). Interacts (via cytoplasmic region) with DST (via N-terminus). Interacts (via N-terminus) with PLEC. Interacts (via cytoplasmic region) with DSP. The intracellular/endo domain is disulfide-linked. Post-translationally, prolines at the third position of the tripeptide repeating unit (G-X-Y) are hydroxylated in some or all of the chains. In terms of processing, the ectodomain is shedded from the surface of keratinocytes resulting in a 120-kDa soluble form, also named as 120 kDa linear IgA disease antigen homolog. The shedding is mediated by membrane-bound metalloproteases.

It localises to the cell junction. The protein resides in the hemidesmosome. The protein localises to the membrane. Its subcellular location is the secreted. It is found in the extracellular space. It localises to the extracellular matrix. The protein resides in the basement membrane. May play a role in the integrity of hemidesmosome and the attachment of basal keratinocytes to the underlying basement membrane. Its function is as follows. The 120 kDa linear IgA disease antigen homolog is an anchoring filament component involved in dermal-epidermal cohesion. The protein is Collagen alpha-1(XVII) chain (COL17A1) of Bos taurus (Bovine).